Here is a 169-residue protein sequence, read N- to C-terminus: Peptide deformylase (169 aa).

Positions 91 and 133 each coordinate Fe cation. Residue Glu-134 is part of the active site. His-137 lines the Fe cation pocket.

The protein belongs to the polypeptide deformylase family. Fe(2+) serves as cofactor.

The enzyme catalyses N-terminal N-formyl-L-methionyl-[peptide] + H2O = N-terminal L-methionyl-[peptide] + formate. In terms of biological role, removes the formyl group from the N-terminal Met of newly synthesized proteins. Requires at least a dipeptide for an efficient rate of reaction. N-terminal L-methionine is a prerequisite for activity but the enzyme has broad specificity at other positions. The polypeptide is Peptide deformylase (Shigella boydii serotype 18 (strain CDC 3083-94 / BS512)).